Here is a 399-residue protein sequence, read N- to C-terminus: Elongation factor Tu (399 aa).

The region spanning 10 to 209 (KPHVNIGTIG…AVDDYIPTPV (200 aa)) is the tr-type G domain. The interval 19-26 (GHVDHGKT) is G1. GTP is bound at residue 19 to 26 (GHVDHGKT). Threonine 26 is a Mg(2+) binding site. A G2 region spans residues 62-66 (GITIN). Residues 83–86 (DCPG) form a G3 region. GTP is bound by residues 83–87 (DCPGH) and 138–141 (NKCD). Positions 138-141 (NKCD) are G4. Residues 175–177 (SAY) form a G5 region.

The protein belongs to the TRAFAC class translation factor GTPase superfamily. Classic translation factor GTPase family. EF-Tu/EF-1A subfamily. In terms of assembly, monomer.

It localises to the cytoplasm. The catalysed reaction is GTP + H2O = GDP + phosphate + H(+). Functionally, GTP hydrolase that promotes the GTP-dependent binding of aminoacyl-tRNA to the A-site of ribosomes during protein biosynthesis. The sequence is that of Elongation factor Tu from Bifidobacterium longum (strain DJO10A).